The primary structure comprises 751 residues: C2 domain-containing protein At1g53590 (751 aa).

2 consecutive transmembrane segments (helical) span residues 2–22 (ESSL…ISSL) and 26–46 (HAFF…RYVM). The SMP-LTD domain occupies 68 to 262 (DSESVRWMNY…QPNMLVVDME (195 aa)). The C2 domain maps to 267-381 (PTSENWFFVD…RGGQRNDMWL (115 aa)). Residues aspartate 298, aspartate 304, aspartate 352, aspartate 354, and aspartate 359 each contribute to the Ca(2+) site. Disordered regions lie at residues 469–519 (QIWE…GRGL) and 572–751 (SGPL…SSSK). Residues 472–482 (EPRKGKSRRLD) show a composition bias toward basic and acidic residues. Over residues 483 to 502 (SQIQRTPNDESLSNGSSSTD) the composition is skewed to polar residues. Positions 590 to 611 (NSGKGHMKDVAKSFLKQAEKSA) are enriched in basic and acidic residues. The segment covering 612 to 624 (KQIKHAFSRKGSM) has biased composition (basic residues). The span at 625–634 (KPRDGHKEIV) shows a compositional bias: basic and acidic residues. Over residues 639–651 (SGTDSESSDDDDA) the composition is skewed to acidic residues. Composition is skewed to basic and acidic residues over residues 664-681 (KLTR…DHVD) and 703-751 (VEAK…SSSK). A coiled-coil region spans residues 701-728 (TDVEAKEEKLKEAAESETRDMDTAMNIK).

Belongs to the extended synaptotagmin family. Ca(2+) serves as cofactor.

It localises to the membrane. This Arabidopsis thaliana (Mouse-ear cress) protein is C2 domain-containing protein At1g53590 (NTMC2T6.1).